The sequence spans 89 residues: Protein M7 (89 aa).

Positions 1-25 are cleaved as a signal peptide; sequence MAAMKSLATAILVVLLLRRLPRGLS. 4 disulfide bridges follow: Cys28-Cys65, Cys38-Cys54, Cys55-Cys80, and Cys67-Cys87.

The protein belongs to the A9/FIL1 family. In terms of tissue distribution, tapetum of anthers.

Its subcellular location is the secreted. The chain is Protein M7 (M7) from Lilium henryi (Henry's lily).